The sequence spans 20 residues: Poneritoxin (20 aa).

Residue Met18 is modified to Methionine sulfoxide; in form U1-PONTX-Dq3c. A Lysine amide; in form U1-PONTX-Dq3a and U1-PONTX-Dq3c modification is found at Lys19.

In terms of processing, the peptide spanning residues 2 to 19 occurs in 3 forms and has been given 3 different names. U1-PONTX-Dq3a has an amidated Lys-19, U1-PONTX-Dq3c has an amidated Lys-19 and an oxidized Met-18, and U1-PONTX-Dq3b has no modifications at either Met-18 or Lys-19. As to expression, expressed by the venom gland.

The protein resides in the secreted. Its function is as follows. May have antimicrobial properties, like most ant linear peptides. This is Poneritoxin from Dinoponera quadriceps (South American ant).